A 246-amino-acid polypeptide reads, in one-letter code: Short chain dehydrogenase/reductase dmxR12 (246 aa).

The NADP(+) site is built by Ile15, Ser34, Lys125, and Lys164. Lys164 functions as the Lowers pKa of active site Tyr in the catalytic mechanism.

This sequence belongs to the short-chain dehydrogenases/reductases (SDR) family.

Its pathway is secondary metabolite biosynthesis. Short chain dehydrogenase/reductase; part of the gene cluster that mediates the biosynthesis of the dimeric xanthones cryptosporioptides. The pathway begins with the synthesis of atrochrysone thioester by the polyketide synthase dmx-nrPKS. The atrochrysone carboxyl ACP thioesterase dmxR1 then breaks the thioester bond and releases the atrochrysone carboxylic acid from dmx-nrPKS. Atrochrysone carboxylic acid is decarboxylated by the decarboxylase dmxR15, and oxidized by the anthrone oxygenase dmxR16 to yield emodin. Emodin is then reduced to emodin hydroquinone by the oxidoreductase dmxR7. A-ring reduction by the short chain dehydrogenase dmxR18, dehydration by the scytalone dehydratase-like protein dmxR17 and probable spontaneous re-oxidation, results in overall deoxygenation to chrysophanol. Baeyer-Villiger oxidation by the Baeyer-Villiger monooxygenase (BVMO) dmxR6 then yields monodictylactone in equilibrium with monodictyphenone. In the case of the cryptosporioptides biosynthesis, monodictylactone is reduced at C-12 to an alcohol (by the short chain dehydrogenases dmxR12 or dmxR8) and hydroxylated at C-5 by dmxR9, yielding the electron-rich aromatic which could eliminate H(2)O to form the ortho-quinonemethide, followed by tautomerisation to paraquinone and complete the formal reduction to produce the 10-methylgroup. Conjugate addition of C-4a-OH to the resulting paraquinone by the monooxygenase dmxR10 then gives cyclohexadienone, which is then reduced at C-5 by the short chain dehydrogenase dmxR3 to give the dihydroxanthone. The 6,7-epoxide in the cryptosporioptides could be introduced by the cytochrome P450 monooxygenase dmxL3. The highly reducing PKS dmxL2 manufactures butyrate, which is further carboxylated by dmxL1 to form ethylmalonate. It is not yet clear whether the carboxylation occurs while the butyrate is attached to the ACP of dmxL2, but this unusual fungal metabolite could then be esterified to O-5 by the O-acetyltransferase dmxR13. Finally, dimerization performed by dmxR5 gives the observed dimers cryptosporioptides A, B and C as the final products of the pathway. The protein is Short chain dehydrogenase/reductase dmxR12 of Cryptosporiopsis sp. (strain 8999).